We begin with the raw amino-acid sequence, 280 residues long: MQEVISYIQKAVLEISNALKFPDTSYSQNQNFTGDTQLKFDVLSDEIITKTLSQCSSIKAIISEEKDEILTLNERANFIVAYDPLDGSSLMDVNFAIGSIFAIYEEKANAKNLRAALYSMYGARLELVICKDQPKLYRLNANNEFIFIKDLKMNEKGKINATGGTQKFWEEKHAKFIKNLFDEGYRLRYSGAMVSDINQILLKGGGIFSYPATQDAPNGKLRAFFEVFPLAFIIEKAGGKTTNGKNRSLLELEFDKIHATTPCFFGSEYEISKLLKAYNE.

Mg(2+) contacts are provided by Glu64, Asp83, Leu85, and Asp86. Residues 86–89, Tyr189, and Lys220 each bind substrate; that span reads DGSS. Glu226 contacts Mg(2+).

This sequence belongs to the FBPase class 1 family. Homotetramer. Mg(2+) is required as a cofactor.

It localises to the cytoplasm. It carries out the reaction beta-D-fructose 1,6-bisphosphate + H2O = beta-D-fructose 6-phosphate + phosphate. The protein operates within carbohydrate biosynthesis; gluconeogenesis. This chain is Fructose-1,6-bisphosphatase class 1, found in Campylobacter jejuni (strain RM1221).